Reading from the N-terminus, the 95-residue chain is MNCKLTALLFLGLIVIASCGWINEKKMQQKIDEKIGKNIIGGMAKAVIHKMAKNEFQCVANVDTLGNCKKHCAKTTGEKGYCHGTKCKCGIELSY.

An N-terminal signal peptide occupies residues 1–19 (MNCKLTALLFLGLIVIASC). Residues 55-95 (EFQCVANVDTLGNCKKHCAKTTGEKGYCHGTKCKCGIELSY) form the BetaSPN-type CS-alpha/beta domain. Intrachain disulfides connect Cys58/Cys82, Cys68/Cys87, and Cys72/Cys89.

In terms of processing, disulfide bonds are critical for antiviral function, and their disruption inhibit viral activity. Expressed by the venom gland.

Its subcellular location is the secreted. Its function is as follows. Antibacterial peptide. Dose-dependently inhibits Dengue virus (DENV), Zika virus (ZIKV) and Hepatitis C virus (HCV) infections. Two mechanisms of action have been described by two different groups: one involving activity on extracellular particles, and the other regulating the immune system. On Dengue virus (DENV), Zika virus (ZIKV), suppress the established viral infection, similar to the effect of interferon (IFN)-beta. Mechanistically, upregulates the expression of IFN-beta by activating interferon regulatory transcription factor 3 (IRF3) phosphorylation. On HCV and DENV, acts by inactivating extra-cellular infectious particles without affecting viral replication. Shows very weak inhibition on measles virus. Is neither toxic nor hemolytic in vitro at high concentrations. The polypeptide is Scorpine-like peptide Smp76 (Scorpio palmatus (Israeli golden scorpion)).